The chain runs to 771 residues: MSGFLTSLDPRRVQWGAAWYAMHSRILRTKPVESMLEGTGATTAHGTKLAQVLTTMDLISLGVGSCVGTGMYVVSGLVAKEMAGPGVIVSFIIAAVASILSGVCYAEFGVRVPKTTGSAYTYSYVTVGEFVAFFIGWNLILEYLIGTAAGASALSSMFDSLANHTISRWMVDSVGTLNGLGKGEQSYPDLLALVIAIIVTIIVALGVKNSVGFNNVLNVLNLAVWVFIMIAGFFFINGKYWAEGQFLPYGWSGVLQGAATCFYAFIGFDIIATTGEEAKNPNTSIPYAITASLVICLTAYVSVSMILTLMVPYDTIDTESPLMEMFVARGFYAAKFVVAIGSVAGLTVSLLGSLFPMPRVIYAMAGDGLLFRFLAHVSSYTETPVVACIVSGFLAALLSLLVSLRDLIEMMSIGTLLAYTLVSVCVLLLRYQPESDIDGFVKFLSEEHTKKKEGILADCEKEVCSPVSEGEEFSGPATNTCGAKNLPSLGDNEMLIGKSDKSTYNVNHPNYGTVDMTTGIEADESENIYLIKLKKLIGPRYYTMRIQLGLPGKMDRPTAATGHTVTICVLLLFILMFVFCSFIIFGSDYISEQSWWAILLVVLMVLLISALVFVILQQPENPKKLPYMAPCLPFVPAFAMLVNIYLMLKLSTITWIRFAVWCFVGMLIYFGYGIWNSTLEISAREEALHQSTYQRYDVDDPFSVEEGFSYATEGESQENWGGPAEDKGFYYQQMSDTQPNTRTSSKAKSKSKHKQNSEALIANDELDYSPE.

Helical transmembrane passes span 58–78 (LISL…SGLV), 83–103 (AGPG…LSGV), 130–150 (FVAF…TAAG), 187–207 (YPDL…ALGV), 216–236 (VLNV…FFFI), and 251–271 (WSGV…FDII). An N-linked (GlcNAc...) asparagine glycan is attached at Asn-282. A run of 5 helical transmembrane segments spans residues 291–311 (ASLV…TLMV), 336–356 (FVVA…SLFP), 360–380 (VIYA…VSSY), 384–404 (PVVA…LVSL), and 407–427 (LIEM…VCVL). Residues Ser-465, Ser-468, and Ser-488 each carry the phosphoserine modification. A run of 4 helical transmembrane segments spans residues 565–585 (VTIC…FIIF), 596–616 (WAIL…FVIL), 628–648 (MAPC…YLML), and 655–675 (WIRF…YGIW). Asn-676 carries N-linked (GlcNAc...) asparagine glycosylation. Residues 712 to 771 (TEGESQENWGGPAEDKGFYYQQMSDTQPNTRTSSKAKSKSKHKQNSEALIANDELDYSPE) are disordered. Positions 732–743 (QQMSDTQPNTRT) are enriched in polar residues. Positions 745-754 (SKAKSKSKHK) are enriched in basic residues. 2 positions are modified to phosphoserine: Ser-757 and Ser-769.

This sequence belongs to the amino acid-polyamine-organocation (APC) superfamily. Cationic amino acid transporter (CAT) (TC 2.A.3.3) family.

It is found in the lysosome membrane. The enzyme catalyses 4-aminobutanoate(in) = 4-aminobutanoate(out). Its function is as follows. Imports 4-aminobutanoate (GABA) into lysosomes. May act as a GABA sensor that regulates mTORC2-dependent INS signaling and gluconeogenesis. The transport mechanism and substrate selectivity remain to be elucidated. This chain is Solute carrier family 7 member 14, found in Bos taurus (Bovine).